Reading from the N-terminus, the 212-residue chain is Large ribosomal subunit protein uL3 (212 aa).

An N5-methylglutamine modification is found at Gln-153.

The protein belongs to the universal ribosomal protein uL3 family. As to quaternary structure, part of the 50S ribosomal subunit. Forms a cluster with proteins L14 and L19. In terms of processing, methylated by PrmB.

One of the primary rRNA binding proteins, it binds directly near the 3'-end of the 23S rRNA, where it nucleates assembly of the 50S subunit. The chain is Large ribosomal subunit protein uL3 from Colwellia psychrerythraea (strain 34H / ATCC BAA-681) (Vibrio psychroerythus).